A 192-amino-acid polypeptide reads, in one-letter code: GTP cyclohydrolase 1 (192 aa).

Residues Cys81, His84, and Cys153 each coordinate Zn(2+).

This sequence belongs to the GTP cyclohydrolase I family. Toroid-shaped homodecamer, composed of two pentamers of five dimers.

It carries out the reaction GTP + H2O = 7,8-dihydroneopterin 3'-triphosphate + formate + H(+). It participates in cofactor biosynthesis; 7,8-dihydroneopterin triphosphate biosynthesis; 7,8-dihydroneopterin triphosphate from GTP: step 1/1. The protein is GTP cyclohydrolase 1 of Streptococcus mutans serotype c (strain ATCC 700610 / UA159).